The following is a 108-amino-acid chain: UPF0060 membrane protein YnfA (108 aa).

Over 1–5 (MIKTT) the chain is Periplasmic. A helical transmembrane segment spans residues 6-26 (LLFFATALCEIIGCFLPWLWL). At 27–30 (KRNA) the chain is on the cytoplasmic side. Residues 31-51 (SIWLLLPAGISLALFVWLLTL) form a helical membrane-spanning segment. At 52–60 (HPAASGRVY) the chain is on the periplasmic side. The chain crosses the membrane as a helical span at residues 61-81 (AAYGGVYVCTALIWLRVVDGV). Residues 82–84 (KLS) are Cytoplasmic-facing. The chain crosses the membrane as a helical span at residues 85–105 (LYDWTGALIALCGMLIIVAGW). At 106-108 (GRT) the chain is on the periplasmic side.

Belongs to the UPF0060 family.

It is found in the cell inner membrane. The protein is UPF0060 membrane protein YnfA of Escherichia coli (strain SMS-3-5 / SECEC).